Here is a 132-residue protein sequence, read N- to C-terminus: Large ribosomal subunit protein bL17 (132 aa).

The protein belongs to the bacterial ribosomal protein bL17 family. Part of the 50S ribosomal subunit. Contacts protein L32.

This chain is Large ribosomal subunit protein bL17, found in Marinobacter nauticus (strain ATCC 700491 / DSM 11845 / VT8) (Marinobacter aquaeolei).